The sequence spans 311 residues: Probable lipid kinase YegS-like (311 aa).

The DAGKc domain maps to 9–140 (EHDGDTWLIL…VDVGTLGDDY (132 aa)). ATP contacts are provided by residues Thr-47, 73–79 (GDGTVNE), and Ser-102. Residues Lys-221, Asp-224, and Leu-226 each contribute to the Mg(2+) site. Glu-281 acts as the Proton acceptor in catalysis.

This sequence belongs to the diacylglycerol/lipid kinase family. YegS lipid kinase subfamily. Requires Mg(2+) as cofactor. The cofactor is Ca(2+).

The protein resides in the cytoplasm. Functionally, probably phosphorylates lipids; the in vivo substrate is unknown. In Chromohalobacter salexigens (strain ATCC BAA-138 / DSM 3043 / CIP 106854 / NCIMB 13768 / 1H11), this protein is Probable lipid kinase YegS-like.